We begin with the raw amino-acid sequence, 327 residues long: Undecaprenyl-phosphate 4-deoxy-4-formamido-L-arabinose transferase (327 aa).

Helical transmembrane passes span 233 to 253 (ILSLIGSVVALSGFLLALLLI) and 268 to 288 (VFTLFAVLFMFIGAQFVGMGL).

The protein belongs to the glycosyltransferase 2 family.

Its subcellular location is the cell inner membrane. It carries out the reaction UDP-4-deoxy-4-formamido-beta-L-arabinose + di-trans,octa-cis-undecaprenyl phosphate = 4-deoxy-4-formamido-alpha-L-arabinopyranosyl di-trans,octa-cis-undecaprenyl phosphate + UDP. Its pathway is glycolipid biosynthesis; 4-amino-4-deoxy-alpha-L-arabinose undecaprenyl phosphate biosynthesis; 4-amino-4-deoxy-alpha-L-arabinose undecaprenyl phosphate from UDP-4-deoxy-4-formamido-beta-L-arabinose and undecaprenyl phosphate: step 1/2. It participates in bacterial outer membrane biogenesis; lipopolysaccharide biosynthesis. Its function is as follows. Catalyzes the transfer of 4-deoxy-4-formamido-L-arabinose from UDP to undecaprenyl phosphate. The modified arabinose is attached to lipid A and is required for resistance to polymyxin and cationic antimicrobial peptides. The protein is Undecaprenyl-phosphate 4-deoxy-4-formamido-L-arabinose transferase of Pectobacterium atrosepticum (strain SCRI 1043 / ATCC BAA-672) (Erwinia carotovora subsp. atroseptica).